A 1084-amino-acid polypeptide reads, in one-letter code: MNNNSKRKTRPTGGGASGGISRYNSNDNSLRPTNNKAGAGGGNGGAAVRPSAQGVYNNTFFMHSATALVGSVVEVRLRSGNIYEGVFRTFSGNFDIALELPACIKSKNLPEEGKVPKHIIFPADTVVTIVAKDFDSQYATAGAFQTDGAISDKCNGARPDEKELEPWDSGANGDIDIELDSAANGWDPNEMFRKNENTFGVTSTFDDSLASYTVPLDKGDSLEFKEAEAKAEKLAAEIENNPTCRDRLDLENGDEEALFAAVERPSTEQDQRGDRGDRERNDRDREREERDRDRDRDRGNKPRGAGDFQLRETMSSDRYITKQTRSITGPQLSHVGMSSQGSGRDRDTRGDGSMMMQSGGGSGQGGSTQSTAALMLAGGLKGVGPAPSANASADSSSKYSGGSMVKRKTVPQGGKVMRNNVPTGGSNVSVSQGGNGNSVGQNKGGYQPSMGMPSQYSYQGNSQIMHGSSQYRNQSHMGGANKLNGDSNANTNKPLPQRQMRQYQGSQSNSSLNYGGEPQSLGKPVHGSHGGHPGQNSNSPPLQTAGPQQQQQQQQQQQQQQQQQQPPQQQQHQNIQPQGQNTQPARQVRTRDNQMQELRQFGQDFQLAPSNTSPPQQQQQQQQQQQQHQVQQQQQRALQQSASPPQQQQQQQQQQQHVVLHQVPQTHLHQAALSQPHYVPQQQPQQAPLPQQQHVPHHMQQKAQQQQLVETQHQHVQKQHQSQPQVQQPPPQLLQDPSQQPLPIYHTMPPPQTSPVVVTSPVLLEQPPPQPMPVVQQQQTQQLATPKPEVSPAPPSSNTTTPTGIASTPTAGVIASAGSEKTTPAAPTPTSNSATVPTGTAATAGGATGTTPVVKKHVLNPSAKPFTPRGPSTPNPSRPHTPQTPVPMTNIYTTTGGHVPPAANQPIYVMQPQHPFPPQTHPQAGQPPRLRRSNYPPMAASQMHVSASAATGQPLITAGPIPQFIQYGHAPHQQQFQSHTYAPMQMRVYPDQPQQLQFMTQTPQSTTPSPGQPHQQFHPPPQPSPAGGGPQPAFTPPTQAATYQLMCVHPQSLLANHYFPPPTPQHPQQNQQQYQIVMQQHQPQ.

A compositionally biased stretch (basic residues) spans M1 to R10. Residues M1 to A46 are disordered. Residues R22–T33 show a composition bias toward polar residues. Residues F60–D135 enclose the Sm domain. 4 positions are modified to phosphoserine: S208, S211, S221, and S266. Disordered regions lie at residues A260–Y935, T1000–P1037, and H1057–Q1084. Positions P265 to N300 are enriched in basic and acidic residues. Residues E312–Q331 show a composition bias toward polar residues. Low complexity-rich tracts occupy residues G384 to S403 and G424 to G445. Polar residues-rich tracts occupy residues M452 to H476 and N484 to N513. Low complexity-rich tracts occupy residues P540–P584, S613–H694, Q701–T711, L733–P743, S754–E765, P773–P788, S796–G812, and T822–V853. Pro residues predominate over residues P871 to P885. Residues V886–G896 show a composition bias toward polar residues. Composition is skewed to low complexity over residues T1000 to F1017 and H1066 to Q1084.

It belongs to the ataxin-2 family. In terms of assembly, homodimer. In the circadian pacemaker neurons, core component of the Atx2-tyf activator complex composed of at least Atx2, tyf, pAbp, Lsm12a. In the circadian pacemaker neurons, also a core component of the Atx2-Not1 repressor complex composed of at least Atx2, tyf, pAbp, me31B. Interacts (via PAM2 motif) with pAbp. Interacts (via N-terminus) with tyf independently of pAbp. Forms a subcomplex composed of Atx2 and pAbP which can associate with the 5' cap of pre-mRNAs independently of tyf, Lsm12a or me31B. Interacts with Lsm12a and me31B.

Its subcellular location is the cytoplasm. In terms of biological role, RNA binding protein that regulates various processes including circadian behaviors, actin filament formation, eye development and oocyte formation. Forms a complex with tyf and pAbp which functions in adult circadian pacemaker neurons to sustain circadian rhythms likely by switching between activator and repressor modes of post-transcriptional regulation via interaction with Lsm12a or me31B. Forms an activator complex (Atx2-tyf activator complex) via association with Lsm12a and activates the TYF-dependent translation of per to maintain 24 hour periodicity in circadian locomotor behaviors. Forms a repressor complex (Atx2-Not1 repressor complex) via the me31B-dependent association with Not1 to promote Not1-dependent post-transcriptional gene silencing and support high-amplitude circadian rhythms in a per-independent manner. Regulates actin filament formation, though it does not directly assemble with actin filaments. Required for oocyte specification and oocyte positioning in the female germline. Also required for normal eye development and bristle morphology. The sequence is that of Ataxin-2 homolog from Drosophila melanogaster (Fruit fly).